Here is a 393-residue protein sequence, read N- to C-terminus: N-lysine methyltransferase KMT5A (393 aa).

The disordered stretch occupies residues proline 68 to valine 88. A compositionally biased stretch (basic and acidic residues) spans methionine 72–glycine 85. A Phosphoserine modification is found at serine 100. Residues arginine 134–glycine 163 are a coiled coil. The tract at residues lysine 135–serine 241 is disordered. The span at methionine 150 to lysine 162 shows a compositional bias: basic and acidic residues. Lysine 162 is subject to N6-acetyllysine. Phosphothreonine is present on threonine 181. The segment covering alanine 197–glutamine 213 has biased composition (basic residues). The 122-residue stretch at glutamate 257–glycine 378 folds into the SET domain. S-adenosyl-L-methionine-binding positions include lysine 267–arginine 269, tyrosine 312, and asparagine 339–histidine 340.

It belongs to the class V-like SAM-binding methyltransferase superfamily. Histone-lysine methyltransferase family. PR/SET subfamily. In terms of assembly, interacts with L3MBTL1. Interacts with SIRT2 (phosphorylated form); the interaction is direct, stimulates KMT5A-mediated methyltransferase activity at histone H4 'Lys-20' (H4K20me1) and is increased in a H(2)O(2)-induced oxidative stress-dependent manner. In terms of processing, acetylated at Lys-162; does not affect methyltransferase activity. Deacetylated at Lys-162 possibly by SIRT2; does not change methyltransferase activity. Post-translationally, ubiquitinated and degraded by the DCX(DTL) complex.

It is found in the nucleus. The protein localises to the chromosome. It catalyses the reaction L-lysyl(20)-[histone H4] + S-adenosyl-L-methionine = N(6)-methyl-L-lysyl(20)-[histone H4] + S-adenosyl-L-homocysteine + H(+). The enzyme catalyses L-lysyl-[protein] + S-adenosyl-L-methionine = N(6)-methyl-L-lysyl-[protein] + S-adenosyl-L-homocysteine + H(+). Functionally, protein-lysine N-methyltransferase that monomethylates both histones and non-histone proteins. Specifically monomethylates 'Lys-20' of histone H4 (H4K20me1). H4K20me1 is enriched during mitosis and represents a specific tag for epigenetic transcriptional repression. Mainly functions in euchromatin regions, thereby playing a central role in the silencing of euchromatic genes. Required for cell proliferation, probably by contributing to the maintenance of proper higher-order structure of DNA during mitosis. Involved in chromosome condensation and proper cytokinesis. Nucleosomes are preferred as substrate compared to free histones. Mediates monomethylation of p53/TP53 at 'Lys-382', leading to repress p53/TP53-target genes. Plays a negative role in TGF-beta response regulation and a positive role in cell migration. This is N-lysine methyltransferase KMT5A from Homo sapiens (Human).